Consider the following 914-residue polypeptide: Probable UDP-N-acetylglucosamine--peptide N-acetylglucosaminyltransferase SPINDLY (914 aa).

The interval 1–39 (MVGLEDDTERERSPVVENGFSNGSRSSSSSAGVLSPSRK) is disordered. A compositionally biased stretch (low complexity) spans 19–37 (GFSNGSRSSSSSAGVLSPS). Ser35 carries the post-translational modification Phosphoserine. TPR repeat units follow at residues 43 to 76 (GNDT…DSKN), 77 to 110 (VEAH…DPHN), 112 to 144 (CALT…DASY), 152 to 185 (AIVL…DPHY), 186 to 219 (APAY…RPMY), 220 to 253 (AEAY…SPNF), 261 to 294 (AIAL…NWHY), 295 to 328 (ADAM…NPHC), 329 to 362 (AEAC…KPNF), 364 to 396 (QSLN…NPTY), and 397 to 430 (AEAF…DPDS). The catalytic region stretch occupies residues 431–914 (RNAGQNRLLA…QLSKRMDSTS (484 aa)). A disordered region spans residues 866–914 (PLISKDLGPSRVSVTGEATPSLKANGSAPVPSSLPTQSPQLSKRMDSTS). The segment covering 877-889 (VSVTGEATPSLKA) has biased composition (polar residues). The segment covering 894-907 (PVPSSLPTQSPQLS) has biased composition (low complexity).

This sequence belongs to the glycosyltransferase 41 family. O-GlcNAc transferase subfamily. As to quaternary structure, homomultimer; via its TPR repeats. Interacts with GI. Interacts with TCP14 and TCP15. Interacts (via N-terminus) with APRR5. Interacts with CPN20. As to expression, widely expressed. Present throughout the plant (at protein level).

The protein resides in the cytoplasm. The protein localises to the nucleus. The enzyme catalyses L-seryl-[protein] + UDP-N-acetyl-alpha-D-glucosamine = 3-O-(N-acetyl-beta-D-glucosaminyl)-L-seryl-[protein] + UDP + H(+). The catalysed reaction is L-threonyl-[protein] + UDP-N-acetyl-alpha-D-glucosamine = 3-O-(N-acetyl-beta-D-glucosaminyl)-L-threonyl-[protein] + UDP + H(+). It carries out the reaction L-seryl-[protein] + GDP-beta-L-fucose = 3-O-(alpha-L-fucosyl)-L-seryl-[protein] + GDP + H(+). It catalyses the reaction L-threonyl-[protein] + GDP-beta-L-fucose = 3-O-(alpha-L-fucosyl)-L-threonyl-[protein] + GDP + H(+). Its pathway is protein modification; protein glycosylation. Probable O-linked N-acetylglucosamine transferase (OGT) involved in various processes such as gibberellin (GA) signaling pathway and circadian clock. OGTs catalyze the addition of nucleotide-activated sugars directly onto the polypeptide through O-glycosidic linkage with the hydroxyl of serine or threonine. Probably acts by adding O-linked sugars to yet unknown proteins. Acts as a repressor of GA signaling pathway to inhibit hypocotyl elongation. Functions with GIGANTEA (GI) in pathways controlling flowering, circadian cotyledon movements and hypocotyl elongation. Acts as a light-regulated promoter of elongation via its interaction with GI. Acts as an activator of cytokinin signaling. Required with SEC for gamete and seed development. Its OGT activity has been proved in vitro but not in vivo. Possesses O-fucosyltransferase activity on specific serine and threonine residues. Mediates O-fucosylation of the DELLA protein RGA, a repressor of the GA signaling pathway. O-fucosylation enhances RGA activity by promoting RGA binding to key transcription factors in brassinosteroid and light-signaling pathways. Regulates root hair patterning upstream of the transcription factor WER, independently of DELLA proteins and GA signaling. Involved in abscisic acid (ABA) signaling partly through functional ABAR. Mediates O-fucosylation of CPN20 that may depress ABA responses during seed germination and seedling development. Involved in the modulation of the pace of the circadian clock by mediating O-fucosylation of APRR5, one of the core circadian clock components. O-fucosylation promotes APRR5 proteolysis. This chain is Probable UDP-N-acetylglucosamine--peptide N-acetylglucosaminyltransferase SPINDLY, found in Arabidopsis thaliana (Mouse-ear cress).